Here is a 141-residue protein sequence, read N- to C-terminus: Hemoglobin subunit alpha-D (141 aa).

One can recognise a Globin domain in the interval 1-141 (MLTADDKKLI…VAAVLAEKYR (141 aa)). 2 residues coordinate heme b: H58 and H87.

This sequence belongs to the globin family. As to quaternary structure, heterotetramer of two alpha-D chains and two beta chains. As to expression, red blood cells.

Its function is as follows. Involved in oxygen transport from the lung to the various peripheral tissues. This is Hemoglobin subunit alpha-D (HBAD) from Aegypius monachus (Cinereous vulture).